A 473-amino-acid chain; its full sequence is Ribulose bisphosphate carboxylase large chain (473 aa).

The substrate site is built by asparagine 116 and threonine 166. The active-site Proton acceptor is lysine 168. Lysine 170 is a binding site for substrate. Residues lysine 194, aspartate 196, and glutamate 197 each coordinate Mg(2+). Lysine 194 is modified (N6-carboxylysine). The active-site Proton acceptor is the histidine 287. Substrate is bound by residues arginine 288, histidine 320, and serine 372.

The protein belongs to the RuBisCO large chain family. Type I subfamily. In terms of assembly, heterohexadecamer of 8 large chains and 8 small chains. The cofactor is Mg(2+).

The catalysed reaction is 2 (2R)-3-phosphoglycerate + 2 H(+) = D-ribulose 1,5-bisphosphate + CO2 + H2O. It catalyses the reaction D-ribulose 1,5-bisphosphate + O2 = 2-phosphoglycolate + (2R)-3-phosphoglycerate + 2 H(+). Functionally, ruBisCO catalyzes two reactions: the carboxylation of D-ribulose 1,5-bisphosphate, the primary event in carbon dioxide fixation, as well as the oxidative fragmentation of the pentose substrate. Both reactions occur simultaneously and in competition at the same active site. The chain is Ribulose bisphosphate carboxylase large chain from Thiomonas intermedia (strain K12) (Thiobacillus intermedius).